We begin with the raw amino-acid sequence, 521 residues long: DEAD-box ATP-dependent RNA helicase 12 (521 aa).

The segment at 1–97 (MHHPRARYPP…QQWLRRDQAT (97 aa)) is disordered. Residues 13-50 (TSGGGGGGGGGGGGGRGNGGGGFGGGGGGGGGNHGYYG) show a composition bias toward gly residues. The span at 51 to 89 (RGPQPQPQQQHYHHQAQQLHQHQQQQQHAQRNSSSQQQQ) shows a compositional bias: low complexity. The short motif at 147-175 (NEFEDYFLKRELLMGIYEKGFERPSPIQE) is the Q motif element. Residues 178–348 (IPIALTGSDI…EKYLPRPYVI (171 aa)) enclose the Helicase ATP-binding domain. Position 191 to 198 (191 to 198 (AKNGTGKT)) interacts with ATP. The short motif at 296 to 299 (DEAD) is the DEAD box element. Residues 358 to 518 (GITQYYAFVE…TIPPQIDLAV (161 aa)) form the Helicase C-terminal domain.

This sequence belongs to the DEAD box helicase family. DDX6/DHH1 subfamily.

It is found in the cytoplasm. The protein localises to the P-body. The catalysed reaction is ATP + H2O = ADP + phosphate + H(+). In terms of biological role, ATP-dependent RNA helicase involved in mRNA turnover, and more specifically in mRNA decapping. This Oryza sativa subsp. japonica (Rice) protein is DEAD-box ATP-dependent RNA helicase 12.